Consider the following 84-residue polypeptide: Small ribosomal subunit protein uS17 (84 aa).

This sequence belongs to the universal ribosomal protein uS17 family. Part of the 30S ribosomal subunit.

Its function is as follows. One of the primary rRNA binding proteins, it binds specifically to the 5'-end of 16S ribosomal RNA. This chain is Small ribosomal subunit protein uS17, found in Borrelia recurrentis (strain A1).